Consider the following 291-residue polypeptide: Undecaprenyl-diphosphatase (291 aa).

8 helical membrane passes run 1–21 (MLILELIKGIILGIVEGLTEF), 48–68 (SAFTFKIVIQLGSVFAGAWVF), 99–119 (LHIIVGMIPAGVLGLLFDDVI), 123–143 (LFSVPTVMIGLFIGAIYMIIA), 159–179 (INYFQAFVIGLSQAIAMWPGF), 200–220 (SDFTFIMAVPVMLAASGLSLV), 236–256 (LGFLAAFIVGLIAIKTFLYLI), and 269–289 (IVLVIIIAILYFGFGIGQGIT).

Belongs to the UppP family.

It is found in the cell membrane. The catalysed reaction is di-trans,octa-cis-undecaprenyl diphosphate + H2O = di-trans,octa-cis-undecaprenyl phosphate + phosphate + H(+). Catalyzes the dephosphorylation of undecaprenyl diphosphate (UPP). Confers resistance to bacitracin. The protein is Undecaprenyl-diphosphatase of Staphylococcus saprophyticus subsp. saprophyticus (strain ATCC 15305 / DSM 20229 / NCIMB 8711 / NCTC 7292 / S-41).